We begin with the raw amino-acid sequence, 149 residues long: Transcription antitermination protein NusB (149 aa).

This sequence belongs to the NusB family.

In terms of biological role, involved in transcription antitermination. Required for transcription of ribosomal RNA (rRNA) genes. Binds specifically to the boxA antiterminator sequence of the ribosomal RNA (rrn) operons. This chain is Transcription antitermination protein NusB, found in Caulobacter vibrioides (strain ATCC 19089 / CIP 103742 / CB 15) (Caulobacter crescentus).